We begin with the raw amino-acid sequence, 183 residues long: Adenine phosphoribosyltransferase (183 aa).

Belongs to the purine/pyrimidine phosphoribosyltransferase family. As to quaternary structure, homodimer.

The protein localises to the cytoplasm. It carries out the reaction AMP + diphosphate = 5-phospho-alpha-D-ribose 1-diphosphate + adenine. Its pathway is purine metabolism; AMP biosynthesis via salvage pathway; AMP from adenine: step 1/1. In terms of biological role, catalyzes a salvage reaction resulting in the formation of AMP, that is energically less costly than de novo synthesis. The protein is Adenine phosphoribosyltransferase of Escherichia fergusonii (strain ATCC 35469 / DSM 13698 / CCUG 18766 / IAM 14443 / JCM 21226 / LMG 7866 / NBRC 102419 / NCTC 12128 / CDC 0568-73).